We begin with the raw amino-acid sequence, 427 residues long: Adenylosuccinate synthetase (427 aa).

Residues 12-18 and 40-42 each bind GTP; these read GDEGKGK and GHT. Aspartate 13 (proton acceptor) is an active-site residue. 2 residues coordinate Mg(2+): aspartate 13 and glycine 40. IMP contacts are provided by residues 13-16, 38-41, threonine 128, arginine 142, glutamine 223, threonine 238, and arginine 302; these read DEGK and NAGH. The active-site Proton donor is histidine 41. Substrate is bound at residue 298–304; the sequence is TVTGRAR. Residues arginine 304, 330–332, and 412–414 contribute to the GTP site; these read RLD and SVG.

It belongs to the adenylosuccinate synthetase family. In terms of assembly, homodimer. Mg(2+) serves as cofactor.

The protein localises to the cytoplasm. It catalyses the reaction IMP + L-aspartate + GTP = N(6)-(1,2-dicarboxyethyl)-AMP + GDP + phosphate + 2 H(+). The protein operates within purine metabolism; AMP biosynthesis via de novo pathway; AMP from IMP: step 1/2. Its function is as follows. Plays an important role in the de novo pathway of purine nucleotide biosynthesis. Catalyzes the first committed step in the biosynthesis of AMP from IMP. This is Adenylosuccinate synthetase from Brachyspira hyodysenteriae (strain ATCC 49526 / WA1).